The chain runs to 506 residues: Cobyric acid synthase (506 aa).

In terms of domain architecture, GATase cobBQ-type spans Asp251 to Phe448. The Nucleophile role is filled by Cys332. The active site involves His440.

It belongs to the CobB/CobQ family. CobQ subfamily.

Its pathway is cofactor biosynthesis; adenosylcobalamin biosynthesis. In terms of biological role, catalyzes amidations at positions B, D, E, and G on adenosylcobyrinic A,C-diamide. NH(2) groups are provided by glutamine, and one molecule of ATP is hydrogenolyzed for each amidation. The sequence is that of Cobyric acid synthase from Salmonella choleraesuis (strain SC-B67).